The primary structure comprises 408 residues: Methyltransferase/ribosomally synthesized type I borosin cyclic peptide precursor sveMA (408 aa).

The tract at residues methionine 1–arginine 250 is methyltransferase domain. Residues arginine 73, tyrosine 77, and tyrosine 99 contribute to the active site. The S-adenosyl-L-methionine site is built by tyrosine 99, histidine 101, isoleucine 104, alanine 131, glutamine 173, glycine 211, serine 242, and threonine 244. Positions aspartate 251–threonine 375 are clasp domain. Residues valine 371–proline 385 form a precursor leader region. The residue at position 401 (valine 401) is an N-methylvaline. Isoleucine 402 bears the N-methylisoleucine mark. An N-methylvaline modification is found at valine 406.

This sequence in the N-terminal section; belongs to the precorrin methyltransferase family. Homodimer. SveMA automethylates at Val-401, Ile-402 and Val-406 before being processed by a prolyloligopeptidase which likely forms a peptidyl ester upon removal of the follower propeptide, which then undergoes macrocyclization with the N-terminus of the modified core peptide. Peptide backbone alpha-N-methylations change the physicochemical properties of amide bonds to provide structural constraints and other favorable characteristics including biological membrane permeability to peptides.

The protein operates within secondary metabolite biosynthesis. In terms of biological role, fusion protein of the methyltransferase sveM and a type I borosin core peptide; part of the gene cluster that mediates the biosynthesis of a type I borosin, a highly methylated cyclic peptide with potent biological activities. Type I borosins derive from the C-terminus of the fusion protein, and it is the same protein that methylates its own C-terminus using S-adenosyl methionine (SAM). The C-terminus is subsequently cleaved off and macrocyclized by a prolyloligopeptidase to give the final product. This is Methyltransferase/ribosomally synthesized type I borosin cyclic peptide precursor sveMA from Serendipita vermifera subsp. bescii (Mycorrhizal fungus).